The sequence spans 390 residues: GTPase Obg (390 aa).

One can recognise an Obg domain in the interval 1–159 (MKFVDEASIL…RELLLELMLL (159 aa)). Residues 127–147 (NTRFKSSVNRTPRQKTNGTPG) form a disordered region. Residues 129-145 (RFKSSVNRTPRQKTNGT) show a composition bias toward polar residues. The OBG-type G domain occupies 160–333 (ADVGMLGMPN…LCWDVMTFII (174 aa)). GTP-binding positions include 166–173 (GMPNAGKS), 191–195 (FTTLV), 213–216 (DIPG), 283–286 (NKID), and 314–316 (SAA). 2 residues coordinate Mg(2+): Ser-173 and Thr-193.

Belongs to the TRAFAC class OBG-HflX-like GTPase superfamily. OBG GTPase family. As to quaternary structure, monomer. Requires Mg(2+) as cofactor.

The protein resides in the cytoplasm. Functionally, an essential GTPase which binds GTP, GDP and possibly (p)ppGpp with moderate affinity, with high nucleotide exchange rates and a fairly low GTP hydrolysis rate. Plays a role in control of the cell cycle, stress response, ribosome biogenesis and in those bacteria that undergo differentiation, in morphogenesis control. This chain is GTPase Obg, found in Escherichia coli O7:K1 (strain IAI39 / ExPEC).